The sequence spans 259 residues: MSLAVATPASARLSPLTTSSPEPCRRRRLLLSAAAPLRRTRLRRRIAVVASVPDPAARPAEYTPWLIAGLGNPGSKYHGTRHNVGFEMVDRIARDEGITMNTIQSKSLLGIGSIGEVPVLLVKPQSYINYSGEAIGPLAAYYQVPLRHILVMYDEMSLPNGVLRLQRKGGHGRHNGLQNVMECLDSSRELPRLSIGIGSPPGKMDTRAFLLQKFSSEERLQIDTALEQGVDAVRTLVLKGFSGSIERFNLVQKYKFHSV.

The tract at residues 1 to 21 is disordered; sequence MSLAVATPASARLSPLTTSSP. The transit peptide at 1 to 49 directs the protein to the chloroplast; the sequence is MSLAVATPASARLSPLTTSSPEPCRRRRLLLSAAAPLRRTRLRRRIAVV. Tyr-77 is a binding site for tRNA. His-82 functions as the Proton acceptor in the catalytic mechanism. Tyr-127, Asn-129, and Asn-175 together coordinate tRNA.

Belongs to the PTH family. CRS2 subfamily. In terms of assembly, part of large ribonucleo-protein complexes that include group IIB introns and either CAF1 or CAF2.

It localises to the plastid. The protein localises to the chloroplast stroma. Its function is as follows. Required for the splicing of group IIB introns in chloroplasts. This is Chloroplastic group IIB intron splicing facilitator CRS2, chloroplastic from Oryza sativa subsp. japonica (Rice).